The following is a 1224-amino-acid chain: Potassium channel subfamily T member 1 (1224 aa).

A disordered region spans residues 1–37 (MARAKLPRSPSEGKAGPGDTPAGAAAPEEPHGLSPLL). Over 1 to 79 (MARAKLPRSP…LFFIKNQRSS (79 aa)) the chain is Cytoplasmic. Residues 13–27 (GKAGPGDTPAGAAAP) are compositionally biased toward low complexity. A helical membrane pass occupies residues 80–112 (LRIRLFNFSLKLLTCLLYIVRVLLDNPDQGIGC). Residues 113–139 (WGCTKYNYTFNGSSSEFHWAPILWVER) lie on the Extracellular side of the membrane. N-linked (GlcNAc...) asparagine glycosylation is found at N119 and N123. The helical transmembrane segment at 140–164 (KMALWVIQVIVATISFLETMLIIYL) threads the bilayer. Over 165–178 (SYKGNIWEQIFHVS) the chain is Cytoplasmic. Residues 179–194 (FVLEMINTLPFIITVF) form a helical membrane-spanning segment. The Extracellular portion of the chain corresponds to 195–201 (WPPLRNL). The helical transmembrane segment at 202–219 (FIPVFLNCWLAKHALENM) threads the bilayer. Residues 220–232 (INDFHRAILRTQS) lie on the Cytoplasmic side of the membrane. A helical membrane pass occupies residues 233 to 260 (AMFNQVLILFCTLLCLVFTGTCGIQHLE). The Extracellular portion of the chain corresponds to 261-267 (RAGGNLN). An intramembrane region (pore-forming) is located at residues 268 to 288 (LLTSFYFCIVTFSTVGFGDVT). Residues V282 and G283 each contribute to the K(+) site. Topologically, residues 289–290 (PK) are extracellular. The helical transmembrane segment at 291 to 324 (IWPSQLLVVILICVTLVVLPLQFEELVYLWMERQ) threads the bilayer. Residues 325–1224 (KSGGNYSRHR…NPETRDETQL (900 aa)) are Cytoplasmic-facing. One can recognise an RCK N-terminal 1 domain in the interval 338-474 (EKHVVLCVSS…FHVKFADHVV (137 aa)). The Na(+) site is built by L499, H502, S524, and N526. Residues 644 to 675 (QNTDCRPSQGGSGGDGTKLTLPTENGSGSRRP) form a disordered region. The span at 663–673 (TLPTENGSGSR) shows a compositional bias: polar residues. Residues C744 and C745 each contribute to the Zn(2+) site. Positions 747 and 750 each coordinate K(+). Na(+) is bound by residues R747 and K750. C752 and H754 together coordinate Zn(2+). N755, Y757, Y763, and G764 together coordinate K(+). Y757 provides a ligand contact to Na(+). A Na(+)-binding site is contributed by F765. Residues 767–907 (NKLIIVSAET…QFRAKDSYSL (141 aa)) enclose the RCK N-terminal 2 domain. The K(+) site is built by S773, L804, D806, G828, and D851. Disordered stretches follow at residues 1038-1066 (REAKGPWGTRAASGSGSTHGRHGGSADPV) and 1198-1224 (SSSQSRKSSCSNKLSSCNPETRDETQL). 2 stretches are compositionally biased toward low complexity: residues 1045–1055 (GTRAASGSGST) and 1198–1215 (SSSQSRKSSCSNKLSSCN).

This sequence belongs to the potassium channel family. Calcium-activated (TC 1.A.1.3) subfamily. KCa4.1/KCNT1 sub-subfamily. In terms of assembly, homotetramer; which constitutes the Na(+)-activated K(+) channel. Interacts with KCNT2; these heterodimer channels differ from the homomers in their unitary conductance, kinetic behavior, subcellular localization, and response to activation of protein kinase C. Interacts (via C-terminus) with FMR1; this interaction alters gating properties of KCNT1. Interacts with CRBN via its cytoplasmic C-terminus. In terms of processing, phosphorylated by protein kinase C. Phosphorylation of the C-terminal domain increases channel activity. Enriched in the brainstem and olfactory bulb and detected at significant levels in four different brain regions.

The protein localises to the cell membrane. The enzyme catalyses K(+)(in) = K(+)(out). Activated by high intracellular Na(+). In addition to activation by Na(+), is cooperatively activated by intracellular Cl(-) levels. Inhibited by Zn(2+). Activated upon stimulation of G-protein coupled receptors, such as CHRM1 and GRIA1. Functionally, sodium-activated K(+) channel. Acts as an important mediator of neuronal membrane excitability. Contributes to the delayed outward currents. Regulates neuronal bursting in sensory neurons. Contributes to synaptic development and plasticity. The chain is Potassium channel subfamily T member 1 (Kcnt1) from Mus musculus (Mouse).